Reading from the N-terminus, the 577-residue chain is Aspartate--tRNA(Asp/Asn) ligase (577 aa).

Position 171 (E171) interacts with L-aspartate. Residues 195–198 (QLFK) are aspartate. R217 serves as a coordination point for L-aspartate. Residues 217-219 (RDE) and Q226 contribute to the ATP site. H444 provides a ligand contact to L-aspartate. Position 474 (E474) interacts with ATP. Residue R481 coordinates L-aspartate. Position 526–529 (526–529 (GFDR)) interacts with ATP.

The protein belongs to the class-II aminoacyl-tRNA synthetase family. Type 1 subfamily. Homodimer.

The protein resides in the cytoplasm. The enzyme catalyses tRNA(Asx) + L-aspartate + ATP = L-aspartyl-tRNA(Asx) + AMP + diphosphate. Aspartyl-tRNA synthetase with relaxed tRNA specificity since it is able to aspartylate not only its cognate tRNA(Asp) but also tRNA(Asn). Reaction proceeds in two steps: L-aspartate is first activated by ATP to form Asp-AMP and then transferred to the acceptor end of tRNA(Asp/Asn). The polypeptide is Aspartate--tRNA(Asp/Asn) ligase (Helicobacter pylori (strain G27)).